A 405-amino-acid chain; its full sequence is Replication factor C large subunit (405 aa).

47 to 54 contributes to the ATP binding site; that stretch reads GPPGVGKT.

The protein belongs to the activator 1 small subunits family. RfcL subfamily. In terms of assembly, heteromultimer composed of small subunits (RfcS) and large subunits (RfcL).

Its function is as follows. Part of the RFC clamp loader complex which loads the PCNA sliding clamp onto DNA. The sequence is that of Replication factor C large subunit from Saccharolobus islandicus (strain Y.N.15.51 / Yellowstone #2) (Sulfolobus islandicus).